The chain runs to 1466 residues: Immediate-early protein 2 (1466 aa).

8 disordered regions span residues Met-1 to Tyr-21, Asn-223 to Gly-242, Tyr-339 to Gln-370, Arg-428 to Ala-472, Arg-517 to Asn-965, Phe-1005 to Asn-1068, Ser-1086 to Ala-1179, and Thr-1191 to Ile-1223. Residues Tyr-339–Glu-350 show a composition bias toward polar residues. Positions Arg-428 to Glu-437 are enriched in basic residues. Basic and acidic residues-rich tracts occupy residues Asn-443 to Ala-472 and Pro-536 to Pro-553. Polar residues-rich tracts occupy residues Lys-583–Lys-595 and Lys-640–Phe-665. Over residues Asn-666 to Ser-681 the composition is skewed to low complexity. The segment covering Asn-696–Leu-713 has biased composition (basic and acidic residues). 2 stretches are compositionally biased toward low complexity: residues Ala-720–Ala-756 and Arg-763–Ala-772. Positions Ser-773–Asn-790 are enriched in basic and acidic residues. Positions Arg-791–Ala-800 are enriched in low complexity. Basic and acidic residues predominate over residues Ser-801–Ser-814. Low complexity-rich tracts occupy residues Ser-826–Ala-884 and Ser-926–Ala-940. Positions Arg-955 to Asn-965 are enriched in polar residues. The interval Ala-989–Asn-1037 is interaction with human UBE2I. 3 stretches are compositionally biased toward low complexity: residues Thr-1019 to Ser-1029, Gly-1053 to Asn-1068, and Ser-1086 to Lys-1110. Residues Gln-1116–His-1131 are compositionally biased toward basic and acidic residues. Residues His-1162–Glu-1177 are compositionally biased toward polar residues. A compositionally biased stretch (basic residues) spans Leu-1195–Arg-1213.

This sequence belongs to the herpesviridae IE2 family. In terms of assembly, interacts with human UBE2I in the nucleus. Although this interaction does not promote IE2 sumoylation, it represses transactivation activity.

It is found in the host nucleus. Functionally, transcriptional transactivator. The chain is Immediate-early protein 2 (U90/U86) from Homo sapiens (Human).